We begin with the raw amino-acid sequence, 117 residues long: Large ribosomal subunit protein bL20c (117 aa).

The protein belongs to the bacterial ribosomal protein bL20 family.

Its subcellular location is the plastid. Its function is as follows. Binds directly to 23S ribosomal RNA and is necessary for the in vitro assembly process of the 50S ribosomal subunit. It is not involved in the protein synthesizing functions of that subunit. The sequence is that of Large ribosomal subunit protein bL20c (rpl20) from Euglena longa (Euglenophycean alga).